The sequence spans 807 residues: Ribosome biogenesis protein ERB1 (807 aa).

Positions 1–112 (MMAKNNKTTE…DTTSLTDRLS (112 aa)) are disordered. Acidic residues-rich tracts occupy residues 21–30 (EESDVEEDED) and 42–56 (EASE…YESA). A Phosphoserine modification is found at Ser-23. Residues 57-69 (VEEKESSSDKEAQ) are compositionally biased toward basic and acidic residues. 2 positions are modified to phosphoserine: Ser-72 and Ser-76. The segment covering 86-102 (EEEGDEEEDYDSSEFSD) has biased composition (acidic residues). Lys-127 participates in a covalent cross-link: Glycyl lysine isopeptide (Lys-Gly) (interchain with G-Cter in ubiquitin). Ser-146 and Ser-149 each carry phosphoserine. The interval 265 to 383 (RFVPSKNEAK…LRKVPGYGES (119 aa)) is required for interaction with NOP7. Residues 383 to 419 (SIRERFERSLDLYLAPRVRKNKLNIDPNSLIPELPSP) form a required for interaction with YTM1 region. The residue at position 418 (Ser-418) is a Phosphoserine. WD repeat units follow at residues 435–474 (GHKG…EVYR), 483–523 (NPDD…YDIE), 592–634 (SCKK…TQSP), 637–675 (KSKG…LVKK), 678–717 (PGAR…TPYK), 721–760 (YHEK…DMMK), and 776–807 (INSL…LWTT).

Belongs to the WD repeat BOP1/ERB1 family. Component of the NOP7 complex, composed of ERB1, NOP7 and YTM1. The complex is held together by ERB1, which interacts with NOP7 via its N-terminal domain and with YTM1 via a high-affinity interaction between the seven-bladed beta-propeller domains of the 2 proteins. The NOP7 complex associates with the 66S pre-ribosome.

The protein resides in the nucleus. Its subcellular location is the nucleolus. The protein localises to the nucleoplasm. Its function is as follows. Component of the NOP7 complex, which is required for maturation of the 25S and 5.8S ribosomal RNAs and formation of the 60S ribosome. The protein is Ribosome biogenesis protein ERB1 of Saccharomyces cerevisiae (strain YJM789) (Baker's yeast).